The following is a 304-amino-acid chain: Putative S-adenosyl-L-methionine-dependent methyltransferase MSMEG_1482/MSMEI_1446 (304 aa).

Residues Asp130 and 159-160 (DL) each bind S-adenosyl-L-methionine.

This sequence belongs to the UPF0677 family.

In terms of biological role, exhibits S-adenosyl-L-methionine-dependent methyltransferase activity. This Mycolicibacterium smegmatis (strain ATCC 700084 / mc(2)155) (Mycobacterium smegmatis) protein is Putative S-adenosyl-L-methionine-dependent methyltransferase MSMEG_1482/MSMEI_1446.